The sequence spans 922 residues: Lacticin 481/lactococcin biosynthesis protein LcnDR2 (922 aa).

Could be implicated in the processing or the export process of the lantibiotic lacticin 481/lactococcin DR. The protein is Lacticin 481/lactococcin biosynthesis protein LcnDR2 (lcnDR2) of Lactococcus lactis subsp. lactis (Streptococcus lactis).